We begin with the raw amino-acid sequence, 273 residues long: 4-hydroxy-tetrahydrodipicolinate reductase (273 aa).

Residues 12-17 and glutamate 38 each bind NAD(+); that span reads GAGGRM. Arginine 39 lines the NADP(+) pocket. NAD(+) is bound by residues 102–104 and 126–129; these read GTT and AANF. Histidine 159 acts as the Proton donor/acceptor in catalysis. Position 160 (histidine 160) interacts with (S)-2,3,4,5-tetrahydrodipicolinate. Catalysis depends on lysine 163, which acts as the Proton donor. 169 to 170 provides a ligand contact to (S)-2,3,4,5-tetrahydrodipicolinate; the sequence is GT.

Belongs to the DapB family. In terms of assembly, homotetramer.

The protein resides in the cytoplasm. It catalyses the reaction (S)-2,3,4,5-tetrahydrodipicolinate + NAD(+) + H2O = (2S,4S)-4-hydroxy-2,3,4,5-tetrahydrodipicolinate + NADH + H(+). The enzyme catalyses (S)-2,3,4,5-tetrahydrodipicolinate + NADP(+) + H2O = (2S,4S)-4-hydroxy-2,3,4,5-tetrahydrodipicolinate + NADPH + H(+). It participates in amino-acid biosynthesis; L-lysine biosynthesis via DAP pathway; (S)-tetrahydrodipicolinate from L-aspartate: step 4/4. In terms of biological role, catalyzes the conversion of 4-hydroxy-tetrahydrodipicolinate (HTPA) to tetrahydrodipicolinate. This is 4-hydroxy-tetrahydrodipicolinate reductase from Shigella boydii serotype 18 (strain CDC 3083-94 / BS512).